The primary structure comprises 289 residues: Diaminopimelate epimerase (289 aa).

Positions 13, 47, and 67 each coordinate substrate. Catalysis depends on Cys76, which acts as the Proton donor. Residues 77 to 78 (GN), Asn167, Asn200, and 218 to 219 (ER) each bind substrate. Cys227 functions as the Proton acceptor in the catalytic mechanism. 228–229 (GT) contributes to the substrate binding site.

It belongs to the diaminopimelate epimerase family. As to quaternary structure, homodimer.

It localises to the cytoplasm. The enzyme catalyses (2S,6S)-2,6-diaminopimelate = meso-2,6-diaminopimelate. It functions in the pathway amino-acid biosynthesis; L-lysine biosynthesis via DAP pathway; DL-2,6-diaminopimelate from LL-2,6-diaminopimelate: step 1/1. Its function is as follows. Catalyzes the stereoinversion of LL-2,6-diaminopimelate (L,L-DAP) to meso-diaminopimelate (meso-DAP), a precursor of L-lysine and an essential component of the bacterial peptidoglycan. This Burkholderia pseudomallei (strain 668) protein is Diaminopimelate epimerase.